The following is a 139-amino-acid chain: Small ribosomal subunit protein uS11 (139 aa).

Residues 117–139 (VEDVTPIPHDGTRPKGGRRGRRV) form a disordered region.

This sequence belongs to the universal ribosomal protein uS11 family. As to quaternary structure, part of the 30S ribosomal subunit.

Functionally, located on the platform of the 30S subunit. The chain is Small ribosomal subunit protein uS11 from Thermococcus onnurineus (strain NA1).